A 544-amino-acid polypeptide reads, in one-letter code: Sphingosine-1-phosphate lyase (544 aa).

Over 1-29 (MDSFSYSSMKSMLIQARGSLNSRLSEFEP) the chain is Lumenal. A helical; Signal-anchor for type III membrane protein membrane pass occupies residues 30–50 (LVLLLVPLVSLFLAQIIGSVF). At 51–544 (GVVHEKGLKA…LLVSFMDSQY (494 aa)) the chain is on the cytoplasmic side. N6-(pyridoxal phosphate)lysine is present on K349.

It belongs to the group II decarboxylase family. Sphingosine-1-phosphate lyase subfamily. Pyridoxal 5'-phosphate is required as a cofactor. In terms of tissue distribution, expressed in the peripheral parts of leaves and the bases of trichomes.

The protein resides in the endoplasmic reticulum membrane. The catalysed reaction is sphinganine 1-phosphate = hexadecanal + phosphoethanolamine. It functions in the pathway lipid metabolism; sphingolipid metabolism. In terms of biological role, cleaves phosphorylated sphingoid bases (PSBs), such as sphingosine-1-phosphate, into fatty aldehydes and phosphoethanolamine. May play a minor role in maintenance of sphingolipid metabolism during normal plant development and growth, but be required for maintaining sphingoid long chain bases (LCB) and their phosphorylated derivatives (LCB-P) levels when sphingolipid metabolism is perturbed. May play a role in dehydration stress. In Arabidopsis thaliana (Mouse-ear cress), this protein is Sphingosine-1-phosphate lyase (DPL1).